The sequence spans 85 residues: Large ribosomal subunit protein bL27 (85 aa).

The tract at residues 1–26 (MAHKKGVGSSRNGRDSNPKMLGVKRF) is disordered.

It belongs to the bacterial ribosomal protein bL27 family.

In Roseiflexus sp. (strain RS-1), this protein is Large ribosomal subunit protein bL27.